Here is a 389-residue protein sequence, read N- to C-terminus: Aspartic protease 6 (389 aa).

Positions 1 to 15 are cleaved as a signal peptide; the sequence is MKTFILLAVLGLASA. A Peptidase A1 domain is found at 71 to 384; that stretch reads YLGNITIGTP…DIGNKRMGFA (314 aa). N-linked (GlcNAc...) asparagine glycosylation is present at asparagine 74. The active site involves aspartate 89. A disulfide bond links cysteine 102 and cysteine 106. The active site involves aspartate 277. A disulfide bond links cysteine 312 and cysteine 344.

It belongs to the peptidase A1 family. Post-translationally, glycosylated. Has phosphorylcholine-substituted oligosaccharide N-glycans. Expressed in intestine, muscles, pharynx and hypodermis.

It is found in the secreted. Its function is as follows. Aspartic protease. This chain is Aspartic protease 6, found in Caenorhabditis elegans.